The primary structure comprises 167 residues: Transcription antitermination protein NusB (167 aa).

A disordered region spans residues 1–21 (MIPTDTAPPSKPAQGHKGYKN).

The protein belongs to the NusB family.

Functionally, involved in transcription antitermination. Required for transcription of ribosomal RNA (rRNA) genes. Binds specifically to the boxA antiterminator sequence of the ribosomal RNA (rrn) operons. The sequence is that of Transcription antitermination protein NusB from Nitrosomonas eutropha (strain DSM 101675 / C91 / Nm57).